Here is a 392-residue protein sequence, read N- to C-terminus: Probable Ni/Fe-hydrogenase 2 b-type cytochrome subunit (392 aa).

Residues Met1–Lys11 are Periplasmic-facing. Residues Ile12 to Val32 form a helical membrane-spanning segment. The Cytoplasmic segment spans residues Lys33 to Arg34. A helical transmembrane segment spans residues Leu35–Ile55. The Periplasmic portion of the chain corresponds to Ala56–Asp58. Residues Leu59–Phe79 form a helical membrane-spanning segment. At Asn80–Pro90 the chain is on the cytoplasmic side. Residues Ala91–Gly111 traverse the membrane as a helical segment. Topologically, residues Arg112–Glu133 are periplasmic. Residues Thr134–Phe154 traverse the membrane as a helical segment. Over Glu155–Lys168 the chain is Cytoplasmic. The helical transmembrane segment at Val169 to Gly189 threads the bilayer. Over Ser190 to Glu207 the chain is Periplasmic. Residues Met208 to Glu228 form a helical membrane-spanning segment. Topologically, residues Gly229–Lys249 are cytoplasmic. A helical membrane pass occupies residues Leu250–Ile270. Residues Tyr271–Gly281 are Periplasmic-facing. Residues Asp282–Leu302 traverse the membrane as a helical segment. At Arg303 to Ser333 the chain is on the cytoplasmic side. A helical membrane pass occupies residues Leu334–Ile354. Ser355 is a topological domain (periplasmic). A helical membrane pass occupies residues Ile356–Leu376. The Cytoplasmic segment spans residues Pro377 to Ala392.

Belongs to the NrfD family.

Its subcellular location is the cell inner membrane. In terms of biological role, probable b-type cytochrome. The chain is Probable Ni/Fe-hydrogenase 2 b-type cytochrome subunit (hybB) from Escherichia coli (strain K12).